A 485-amino-acid chain; its full sequence is MFDALAERLEQAWTKLRGQDKISESNVQEALKEVRRALLEADVNLGVVKEFIAQVQEKAVGTQVISGIRPDQQFIKVVYDELVQVMGETHVPLAQAAKAPTVILMAGLQGAGKTTATAKLALHLRKEGRSTLLVATDVYRPAAIDQLITLGKQIDVPVFELGSDANPVEIARQGVEKARQEGIDTVIVDTAGRLQIDTEMMEELAQVKEAIAPHEVLLVVDSMIGQEAASLTRSFHERIGITGAILTKLDGDSRGGAALSIRRVSGQPIKFVGLGEKVEALQPFHPERMASRILGMGDVLTLVEKAQEEIDLADVEKMQEKILAAKFDFTDFLKQMRLLKNMGSLAGFIKLIPGLGGKINDEQLRQGERQLKRVEAMINSMTPQERRDPDLLSNSPSRRHRIAKGCGQTEAEIRQIIQQFQQMRTMMQQMSQGGFPGMGGMGMPGFGGGMPGFGGGAPAPQPGFRGYGPPKKQKKGSKKKKGFGL.

GTP contacts are provided by residues 107–114 (GLQGAGKT), 189–193 (DTAGR), and 247–250 (TKLD). The segment at 452 to 485 (GFGGGAPAPQPGFRGYGPPKKQKKGSKKKKGFGL) is disordered. A compositionally biased stretch (basic residues) spans 471–485 (KKQKKGSKKKKGFGL).

It belongs to the GTP-binding SRP family. SRP54 subfamily. In terms of assembly, part of the signal recognition particle protein translocation system, which is composed of SRP and FtsY.

The protein localises to the cytoplasm. It carries out the reaction GTP + H2O = GDP + phosphate + H(+). Functionally, involved in targeting and insertion of nascent membrane proteins into the cytoplasmic membrane. Binds to the hydrophobic signal sequence of the ribosome-nascent chain (RNC) as it emerges from the ribosomes. The SRP-RNC complex is then targeted to the cytoplasmic membrane where it interacts with the SRP receptor FtsY. This Synechococcus elongatus (strain ATCC 33912 / PCC 7942 / FACHB-805) (Anacystis nidulans R2) protein is Signal recognition particle protein.